The following is a 293-amino-acid chain: 4-diphosphocytidyl-2-C-methyl-D-erythritol kinase (293 aa).

The active site involves K23. Residue 109-119 participates in ATP binding; it reads PVAAGIGGGSA. D151 is a catalytic residue.

This sequence belongs to the GHMP kinase family. IspE subfamily.

It carries out the reaction 4-CDP-2-C-methyl-D-erythritol + ATP = 4-CDP-2-C-methyl-D-erythritol 2-phosphate + ADP + H(+). The protein operates within isoprenoid biosynthesis; isopentenyl diphosphate biosynthesis via DXP pathway; isopentenyl diphosphate from 1-deoxy-D-xylulose 5-phosphate: step 3/6. In terms of biological role, catalyzes the phosphorylation of the position 2 hydroxy group of 4-diphosphocytidyl-2C-methyl-D-erythritol. This chain is 4-diphosphocytidyl-2-C-methyl-D-erythritol kinase, found in Rhizorhabdus wittichii (strain DSM 6014 / CCUG 31198 / JCM 15750 / NBRC 105917 / EY 4224 / RW1) (Sphingomonas wittichii).